A 396-amino-acid polypeptide reads, in one-letter code: Flavohemoprotein (396 aa).

The Globin domain occupies 1 to 136 (MLDNQTIATV…LADIFINREE (136 aa)). H85 contacts heme b. Residues Y95 and E135 each act as charge relay system in the active site. The reductase stretch occupies residues 147-396 (GGWRGLRPFR…YECFGPHKVI (250 aa)). The FAD-binding FR-type domain maps to 150–255 (RGLRPFRINR…TAPRGDFFLD (106 aa)). Residues Y188 and 204-207 (RQYS) each bind FAD. Position 268–273 (268–273 (GVGLTP)) interacts with NADP(+). 389-392 (CFGP) lines the FAD pocket.

Belongs to the globin family. Two-domain flavohemoproteins subfamily. This sequence in the C-terminal section; belongs to the flavoprotein pyridine nucleotide cytochrome reductase family. The cofactor is heme b. It depends on FAD as a cofactor.

The enzyme catalyses 2 nitric oxide + NADPH + 2 O2 = 2 nitrate + NADP(+) + H(+). The catalysed reaction is 2 nitric oxide + NADH + 2 O2 = 2 nitrate + NAD(+) + H(+). Is involved in NO detoxification in an aerobic process, termed nitric oxide dioxygenase (NOD) reaction that utilizes O(2) and NAD(P)H to convert NO to nitrate, which protects the bacterium from various noxious nitrogen compounds. Therefore, plays a central role in the inducible response to nitrosative stress. This Photorhabdus laumondii subsp. laumondii (strain DSM 15139 / CIP 105565 / TT01) (Photorhabdus luminescens subsp. laumondii) protein is Flavohemoprotein.